Reading from the N-terminus, the 580-residue chain is NADH-quinone oxidoreductase subunit C/D (580 aa).

Positions 1 to 171 (MSFDQVIADA…PPFVLTDRLF (171 aa)) are NADH dehydrogenase I subunit C. The tract at residues 195–580 (ELMVLNFGPH…IDFVMSDVDR (386 aa)) is NADH dehydrogenase I subunit D.

It in the N-terminal section; belongs to the complex I 30 kDa subunit family. This sequence in the C-terminal section; belongs to the complex I 49 kDa subunit family. As to quaternary structure, NDH-1 is composed of 13 different subunits. Subunits NuoB, CD, E, F, and G constitute the peripheral sector of the complex.

The protein resides in the cell inner membrane. The catalysed reaction is a quinone + NADH + 5 H(+)(in) = a quinol + NAD(+) + 4 H(+)(out). In terms of biological role, NDH-1 shuttles electrons from NADH, via FMN and iron-sulfur (Fe-S) centers, to quinones in the respiratory chain. The immediate electron acceptor for the enzyme in this species is believed to be ubiquinone. Couples the redox reaction to proton translocation (for every two electrons transferred, four hydrogen ions are translocated across the cytoplasmic membrane), and thus conserves the redox energy in a proton gradient. The polypeptide is NADH-quinone oxidoreductase subunit C/D (Cereibacter sphaeroides (strain ATCC 17025 / ATH 2.4.3) (Rhodobacter sphaeroides)).